We begin with the raw amino-acid sequence, 503 residues long: ATP synthase subunit alpha (503 aa).

170-177 is a binding site for ATP; it reads GDKQTGKT.

The protein belongs to the ATPase alpha/beta chains family. In terms of assembly, F-type ATPases have 2 components, CF(1) - the catalytic core - and CF(0) - the membrane proton channel. CF(1) has five subunits: alpha(3), beta(3), gamma(1), delta(1), epsilon(1). CF(0) has three main subunits: a(1), b(2) and c(9-12). The alpha and beta chains form an alternating ring which encloses part of the gamma chain. CF(1) is attached to CF(0) by a central stalk formed by the gamma and epsilon chains, while a peripheral stalk is formed by the delta and b chains.

Its subcellular location is the cell inner membrane. It catalyses the reaction ATP + H2O + 4 H(+)(in) = ADP + phosphate + 5 H(+)(out). Its function is as follows. Produces ATP from ADP in the presence of a proton gradient across the membrane. The alpha chain is a regulatory subunit. The sequence is that of ATP synthase subunit alpha from Helicobacter pylori (strain P12).